The sequence spans 602 residues: Aspartate--tRNA(Asp/Asn) ligase (602 aa).

Glutamate 170 contributes to the L-aspartate binding site. The segment at 194–197 is aspartate; the sequence is QLFK. Arginine 216 contributes to the L-aspartate binding site. Residues 216–218 and glutamine 225 contribute to the ATP site; that span reads RDE. Histidine 448 is a binding site for L-aspartate. Glutamate 482 contacts ATP. Arginine 489 contacts L-aspartate. 534-537 provides a ligand contact to ATP; sequence GWDR. The segment at 559–602 is disordered; it reads GGVDPLTNAPAPITAQQRKESGVDAKPEPKGDAASAKPDAPADK. A compositionally biased stretch (basic and acidic residues) spans 575–589; sequence QRKESGVDAKPEPKG. A compositionally biased stretch (low complexity) spans 590–602; that stretch reads DAASAKPDAPADK.

It belongs to the class-II aminoacyl-tRNA synthetase family. Type 1 subfamily. In terms of assembly, homodimer.

It is found in the cytoplasm. It catalyses the reaction tRNA(Asx) + L-aspartate + ATP = L-aspartyl-tRNA(Asx) + AMP + diphosphate. Aspartyl-tRNA synthetase with relaxed tRNA specificity since it is able to aspartylate not only its cognate tRNA(Asp) but also tRNA(Asn). Reaction proceeds in two steps: L-aspartate is first activated by ATP to form Asp-AMP and then transferred to the acceptor end of tRNA(Asp/Asn). In Rhodococcus jostii (strain RHA1), this protein is Aspartate--tRNA(Asp/Asn) ligase.